A 157-amino-acid chain; its full sequence is Vitamin K-dependent protein C (157 aa).

The 157-residue stretch at E1–V157 folds into the Peptidase S1 domain. A glycan (N-linked (GlcNAc...) asparagine) is linked at N17. D26 acts as the Charge relay system in catalysis. An N-linked (GlcNAc...) asparagine glycan is attached at N78. 2 disulfides stabilise this stretch: C96-C110 and C121-C149. The active-site Charge relay system is S125.

It belongs to the peptidase S1 family. Plasma; synthesized in the liver.

Its subcellular location is the secreted. The protein localises to the golgi apparatus. It localises to the endoplasmic reticulum. It carries out the reaction Degradation of blood coagulation factors Va and VIIIa.. Functionally, protein C is a vitamin K-dependent serine protease that regulates blood coagulation by inactivating factors Va and VIIIa in the presence of calcium ions and phospholipids. Exerts a protective effect on the endothelial cell barrier function. The polypeptide is Vitamin K-dependent protein C (PROC) (Equus caballus (Horse)).